Consider the following 175-residue polypeptide: Cytochrome c-type biogenesis protein CcmE (175 aa).

The Cytoplasmic segment spans residues 1-8 (MNAVRRKK). Residues 9–29 (LIWVAATLAGAIIAVLLVIYA) form a helical; Signal-anchor for type II membrane protein membrane-spanning segment. The Periplasmic portion of the chain corresponds to 30 to 175 (IGQQTDYYFD…GNHTTSTLQE (146 aa)). Positions 124 and 128 each coordinate heme. A disordered region spans residues 142–175 (AAKGVTPTSEQFSPAIPVKQTAGEGNHTTSTLQE).

This sequence belongs to the CcmE/CycJ family.

It is found in the cell inner membrane. Heme chaperone required for the biogenesis of c-type cytochromes. Transiently binds heme delivered by CcmC and transfers the heme to apo-cytochromes in a process facilitated by CcmF and CcmH. This Psychrobacter sp. (strain PRwf-1) protein is Cytochrome c-type biogenesis protein CcmE.